Reading from the N-terminus, the 476-residue chain is Eukaryotic translation initiation factor 3 subunit L (476 aa).

The 196-residue stretch at 257–452 (DAIRMFSHIL…DLDYALENDL (196 aa)) folds into the PCI domain.

It belongs to the eIF-3 subunit L family. As to quaternary structure, component of the eukaryotic translation initiation factor 3 (eIF-3) complex.

Its subcellular location is the cytoplasm. Its function is as follows. Component of the eukaryotic translation initiation factor 3 (eIF-3) complex, which is involved in protein synthesis of a specialized repertoire of mRNAs and, together with other initiation factors, stimulates binding of mRNA and methionyl-tRNAi to the 40S ribosome. The eIF-3 complex specifically targets and initiates translation of a subset of mRNAs involved in cell proliferation. The polypeptide is Eukaryotic translation initiation factor 3 subunit L (Aspergillus oryzae (strain ATCC 42149 / RIB 40) (Yellow koji mold)).